A 451-amino-acid polypeptide reads, in one-letter code: Phosphoglucosamine mutase (451 aa).

The active-site Phosphoserine intermediate is serine 107. Mg(2+) is bound by residues serine 107, aspartate 246, aspartate 248, and aspartate 250. Phosphoserine is present on serine 107.

The protein belongs to the phosphohexose mutase family. Mg(2+) is required as a cofactor. In terms of processing, activated by phosphorylation.

The catalysed reaction is alpha-D-glucosamine 1-phosphate = D-glucosamine 6-phosphate. Functionally, catalyzes the conversion of glucosamine-6-phosphate to glucosamine-1-phosphate. The polypeptide is Phosphoglucosamine mutase (Burkholderia multivorans (strain ATCC 17616 / 249)).